Reading from the N-terminus, the 324-residue chain is Adenine deaminase (324 aa).

H8, H10, and H186 together coordinate Zn(2+). Residue E189 is the Proton donor of the active site. D267 lines the Zn(2+) pocket. D268 is a binding site for substrate.

It belongs to the metallo-dependent hydrolases superfamily. Adenosine and AMP deaminases family. Adenine deaminase type 2 subfamily. The cofactor is Zn(2+).

It carries out the reaction adenine + H2O + H(+) = hypoxanthine + NH4(+). Functionally, catalyzes the hydrolytic deamination of adenine to hypoxanthine. Plays an important role in the purine salvage pathway and in nitrogen catabolism. The sequence is that of Adenine deaminase from Mesorhizobium japonicum (strain LMG 29417 / CECT 9101 / MAFF 303099) (Mesorhizobium loti (strain MAFF 303099)).